The following is a 309-amino-acid chain: NAD kinase (309 aa).

The Proton acceptor role is filled by aspartate 89. NAD(+)-binding positions include 89–90, 163–164, histidine 174, arginine 191, aspartate 193, and 204–209; these read DG, NE, and TAYALS.

This sequence belongs to the NAD kinase family. A divalent metal cation is required as a cofactor.

It localises to the cytoplasm. It catalyses the reaction NAD(+) + ATP = ADP + NADP(+) + H(+). Involved in the regulation of the intracellular balance of NAD and NADP, and is a key enzyme in the biosynthesis of NADP. Catalyzes specifically the phosphorylation on 2'-hydroxyl of the adenosine moiety of NAD to yield NADP. The protein is NAD kinase of Shewanella baltica (strain OS185).